The primary structure comprises 138 residues: ATP synthase epsilon chain (138 aa).

It belongs to the ATPase epsilon chain family. F-type ATPases have 2 components, CF(1) - the catalytic core - and CF(0) - the membrane proton channel. CF(1) has five subunits: alpha(3), beta(3), gamma(1), delta(1), epsilon(1). CF(0) has three main subunits: a, b and c.

Its subcellular location is the cell inner membrane. In terms of biological role, produces ATP from ADP in the presence of a proton gradient across the membrane. The chain is ATP synthase epsilon chain from Delftia acidovorans (strain DSM 14801 / SPH-1).